Here is a 351-residue protein sequence, read N- to C-terminus: Dihydroorotate dehydrogenase (quinone) (351 aa).

Residues 65 to 69 (AGLDK) and Thr89 contribute to the FMN site. Lys69 serves as a coordination point for substrate. 114–118 (NRLGF) provides a ligand contact to substrate. FMN-binding residues include Asn150 and Asn183. Asn183 provides a ligand contact to substrate. The Nucleophile role is filled by Ser186. A substrate-binding site is contributed by Asn188. FMN is bound by residues Lys228 and Thr256. 257–258 (NT) provides a ligand contact to substrate. FMN-binding positions include Gly279, Gly308, and 329 to 330 (YT).

It belongs to the dihydroorotate dehydrogenase family. Type 2 subfamily. Monomer. FMN serves as cofactor.

It is found in the cell membrane. It catalyses the reaction (S)-dihydroorotate + a quinone = orotate + a quinol. It participates in pyrimidine metabolism; UMP biosynthesis via de novo pathway; orotate from (S)-dihydroorotate (quinone route): step 1/1. Catalyzes the conversion of dihydroorotate to orotate with quinone as electron acceptor. This is Dihydroorotate dehydrogenase (quinone) from Acidovorax sp. (strain JS42).